The chain runs to 55 residues: Large ribosomal subunit protein bL32 (55 aa).

Positions 1–28 are disordered; that stretch reads MAVQQNKPTRSKRGMRRSHDALTTATLS.

The protein belongs to the bacterial ribosomal protein bL32 family.

The chain is Large ribosomal subunit protein bL32 from Serratia proteamaculans (strain 568).